The chain runs to 153 residues: 6,7-dimethyl-8-ribityllumazine synthase (153 aa).

Residues phenylalanine 22, 56–58, and 80–82 each bind 5-amino-6-(D-ribitylamino)uracil; these read AFE and TVI. 85-86 contributes to the (2S)-2-hydroxy-3-oxobutyl phosphate binding site; sequence ST. The active-site Proton donor is the histidine 88. Phenylalanine 113 is a binding site for 5-amino-6-(D-ribitylamino)uracil. Position 127 (arginine 127) interacts with (2S)-2-hydroxy-3-oxobutyl phosphate.

The protein belongs to the DMRL synthase family. In terms of assembly, forms an icosahedral capsid composed of 60 subunits, arranged as a dodecamer of pentamers.

It carries out the reaction (2S)-2-hydroxy-3-oxobutyl phosphate + 5-amino-6-(D-ribitylamino)uracil = 6,7-dimethyl-8-(1-D-ribityl)lumazine + phosphate + 2 H2O + H(+). It participates in cofactor biosynthesis; riboflavin biosynthesis; riboflavin from 2-hydroxy-3-oxobutyl phosphate and 5-amino-6-(D-ribitylamino)uracil: step 1/2. In terms of biological role, catalyzes the formation of 6,7-dimethyl-8-ribityllumazine by condensation of 5-amino-6-(D-ribitylamino)uracil with 3,4-dihydroxy-2-butanone 4-phosphate. This is the penultimate step in the biosynthesis of riboflavin. In Glaesserella parasuis serovar 5 (strain SH0165) (Haemophilus parasuis), this protein is 6,7-dimethyl-8-ribityllumazine synthase.